An 81-amino-acid polypeptide reads, in one-letter code: Neurotoxin LmNaTx11.1 (81 aa).

A signal peptide spans 1-18; the sequence is MKIVIIFFIAMMAVGVYS. The 62-residue stretch at 19–80 folds into the LCN-type CS-alpha/beta domain; that stretch reads KDGYLVKKNG…PTYPSSKTCS (62 aa). Intrachain disulfides connect Cys-29-Cys-79, Cys-33-Cys-56, Cys-42-Cys-61, and Cys-46-Cys-63.

The protein belongs to the long (4 C-C) scorpion toxin superfamily. Sodium channel inhibitor family. Beta subfamily. Expressed by the venom gland.

It localises to the secreted. Binds voltage-independently at site-4 of sodium channels (Nav) and shift the voltage of activation toward more negative potentials thereby affecting sodium channel activation and promoting spontaneous and repetitive firing. This Lychas mucronatus (Chinese swimming scorpion) protein is Neurotoxin LmNaTx11.1.